The chain runs to 465 residues: Cysteine--tRNA ligase (465 aa).

Cysteine 30 provides a ligand contact to Zn(2+). A 'HIGH' region motif is present at residues 32–42 (ITVYDYCHVGH). Zn(2+) contacts are provided by cysteine 214, histidine 239, and glutamate 243. Residues 271–275 (KMSKS) carry the 'KMSKS' region motif. Lysine 274 serves as a coordination point for ATP.

This sequence belongs to the class-I aminoacyl-tRNA synthetase family. Monomer. It depends on Zn(2+) as a cofactor.

It is found in the cytoplasm. It catalyses the reaction tRNA(Cys) + L-cysteine + ATP = L-cysteinyl-tRNA(Cys) + AMP + diphosphate. This Burkholderia vietnamiensis (strain G4 / LMG 22486) (Burkholderia cepacia (strain R1808)) protein is Cysteine--tRNA ligase.